Reading from the N-terminus, the 163-residue chain is Crossover junction endodeoxyribonuclease RuvC (163 aa).

Active-site residues include D7, E68, and H142. Mg(2+) contacts are provided by D7, E68, and H142.

It belongs to the RuvC family. As to quaternary structure, homodimer which binds Holliday junction (HJ) DNA. The HJ becomes 2-fold symmetrical on binding to RuvC with unstacked arms; it has a different conformation from HJ DNA in complex with RuvA. In the full resolvosome a probable DNA-RuvA(4)-RuvB(12)-RuvC(2) complex forms which resolves the HJ. It depends on Mg(2+) as a cofactor.

The protein localises to the cytoplasm. The catalysed reaction is Endonucleolytic cleavage at a junction such as a reciprocal single-stranded crossover between two homologous DNA duplexes (Holliday junction).. In terms of biological role, the RuvA-RuvB-RuvC complex processes Holliday junction (HJ) DNA during genetic recombination and DNA repair. Endonuclease that resolves HJ intermediates. Cleaves cruciform DNA by making single-stranded nicks across the HJ at symmetrical positions within the homologous arms, yielding a 5'-phosphate and a 3'-hydroxyl group; requires a central core of homology in the junction. The consensus cleavage sequence is 5'-(A/T)TT(C/G)-3'. Cleavage occurs on the 3'-side of the TT dinucleotide at the point of strand exchange. HJ branch migration catalyzed by RuvA-RuvB allows RuvC to scan DNA until it finds its consensus sequence, where it cleaves and resolves the cruciform DNA. The sequence is that of Crossover junction endodeoxyribonuclease RuvC from Anaplasma phagocytophilum (strain HZ).